The chain runs to 264 residues: MKQYLHLMKKVLNEGTEKEDRTGTGTVSIFGHQMRFNLKEGFPLVTTKKCHLRSIIHELLWFLKGDTNIAYLRENQVSIWEEWADKTGSLGPIYGKQWRAWGTPDGHQVDQLSQTLELLKNNPDSRRMIVSAWNVGELDKMALAPCHAFFQFYVVKKTLSCQLYQRSCDVFLGLPFNIASYSLLMHMIAQQCDFFLGDFVWTGGDIHLYSNHLDQAHLQLTREPRSLPHLLINRKPDSLFDYHFEDFSLEKYNPYPAIKAPVAI.

Arg-21 lines the dUMP pocket. His-51 is a binding site for (6R)-5,10-methylene-5,6,7,8-tetrahydrofolate. Residue 126 to 127 (RR) coordinates dUMP. Cys-146 acts as the Nucleophile in catalysis. Residues 166 to 169 (RSCD), Asn-177, and 207 to 209 (HLY) each bind dUMP. Asp-169 serves as a coordination point for (6R)-5,10-methylene-5,6,7,8-tetrahydrofolate. A (6R)-5,10-methylene-5,6,7,8-tetrahydrofolate-binding site is contributed by Ala-263.

It belongs to the thymidylate synthase family. Bacterial-type ThyA subfamily. Homodimer.

The protein resides in the cytoplasm. The enzyme catalyses dUMP + (6R)-5,10-methylene-5,6,7,8-tetrahydrofolate = 7,8-dihydrofolate + dTMP. It functions in the pathway pyrimidine metabolism; dTTP biosynthesis. Its function is as follows. Catalyzes the reductive methylation of 2'-deoxyuridine-5'-monophosphate (dUMP) to 2'-deoxythymidine-5'-monophosphate (dTMP) while utilizing 5,10-methylenetetrahydrofolate (mTHF) as the methyl donor and reductant in the reaction, yielding dihydrofolate (DHF) as a by-product. This enzymatic reaction provides an intracellular de novo source of dTMP, an essential precursor for DNA biosynthesis. In Hamiltonella defensa subsp. Acyrthosiphon pisum (strain 5AT), this protein is Thymidylate synthase.